Here is a 471-residue protein sequence, read N- to C-terminus: Cysteine--tRNA ligase (471 aa).

Residue C29 coordinates Zn(2+). The short motif at 31-41 (PTVYNYIHIGN) is the 'HIGH' region element. Residues C209, H234, and E238 each coordinate Zn(2+). The short motif at 266–270 (KMSKS) is the 'KMSKS' region element. Residue K269 coordinates ATP.

It belongs to the class-I aminoacyl-tRNA synthetase family. Monomer. It depends on Zn(2+) as a cofactor.

It is found in the cytoplasm. The catalysed reaction is tRNA(Cys) + L-cysteine + ATP = L-cysteinyl-tRNA(Cys) + AMP + diphosphate. This Listeria monocytogenes serovar 1/2a (strain ATCC BAA-679 / EGD-e) protein is Cysteine--tRNA ligase.